Here is a 36-residue protein sequence, read N- to C-terminus: Mating hormone A-factor 1 (36 aa).

Positions 1–21 (MQPSTATAAPKEKTSSEKKDN) are excised as a propeptide. Residue Cys33 is modified to Cysteine methyl ester. Cys33 carries S-farnesyl cysteine lipidation. Residues 34–36 (VIA) constitute a propeptide, removed in mature form.

The protein localises to the cell membrane. Functionally, the active factor is excreted into the culture medium by haploid cells of the A mating type and acts on cells of the opposite mating type (type alpha). It mediates the conjugation process between the two types by inhibiting the initiation of DNA synthesis in type alpha cells and synchronizing them with type A. The chain is Mating hormone A-factor 1 (MFA1) from Saccharomyces cerevisiae (strain ATCC 204508 / S288c) (Baker's yeast).